Reading from the N-terminus, the 235-residue chain is Chalcone--flavanone isomerase 1 (235 aa).

Substrate-binding residues include T50 and S192.

This sequence belongs to the chalcone isomerase family.

It carries out the reaction a chalcone = a flavanone.. It functions in the pathway secondary metabolite biosynthesis; flavonoid biosynthesis. In terms of biological role, catalyzes the intramolecular cyclization of bicyclic chalcones into tricyclic (S)-flavanones. Responsible for the isomerization of 4,2',4',6'-tetrahydroxychalcone (also termed chalcone) into naringenin. This is Chalcone--flavanone isomerase 1 (CHI1) from Chrysanthemum morifolium (Florist's daisy).